Consider the following 25-residue polypeptide: Chrysophsin-1 (25 aa).

H25 bears the Histidine amide mark.

As to expression, gill. Localized in certain epithelial cells lining the surface of secondary lamellae and eosinophilic granule cell-like cells at the base of secondary lamellae.

The protein resides in the secreted. In terms of biological role, has antibacterial activity against Gram-positive bacteria B.subtilis ATCC 6633, L.garvieae ATCC 49156 and S.iniae F-8502, and Gram-negative bacteria E.coli WT-2, V.anguillarum ATCC 19264, V.penaeicida KHA, V.harveyi ATCC 14126, V.vulnificus ATCC 33148, A.salmonicida NCMB 1102 and P.putida ATCC 12633. Has hemolytic activity against human red blood cells. Seems to disrupt the membranes by adopting an alpha helical conformation. May play a significant role in innate host defense. This is Chrysophsin-1 from Pagrus major (Red sea bream).